The primary structure comprises 376 residues: Chaperone protein DnaJ (376 aa).

In terms of domain architecture, J spans 5-69; the sequence is DYYEVLGVSK…QKRAQYDQYG (65 aa). The CR-type zinc-finger motif lies at 133-215; that stretch reads GKDAEIEIPR…CHGKGRVTKT (83 aa). Residues C146, C149, C163, C166, C189, C192, C203, and C206 each coordinate Zn(2+). CXXCXGXG motif repeat units follow at residues 146-153, 163-170, 189-196, and 203-210; these read CDTCHGSG, CSHCGGKG, CQYCNGTG, and CPTCHGKG.

It belongs to the DnaJ family. In terms of assembly, homodimer. Requires Zn(2+) as cofactor.

It is found in the cytoplasm. Its function is as follows. Participates actively in the response to hyperosmotic and heat shock by preventing the aggregation of stress-denatured proteins and by disaggregating proteins, also in an autonomous, DnaK-independent fashion. Unfolded proteins bind initially to DnaJ; upon interaction with the DnaJ-bound protein, DnaK hydrolyzes its bound ATP, resulting in the formation of a stable complex. GrpE releases ADP from DnaK; ATP binding to DnaK triggers the release of the substrate protein, thus completing the reaction cycle. Several rounds of ATP-dependent interactions between DnaJ, DnaK and GrpE are required for fully efficient folding. Also involved, together with DnaK and GrpE, in the DNA replication of plasmids through activation of initiation proteins. This chain is Chaperone protein DnaJ, found in Listeria monocytogenes serotype 4b (strain CLIP80459).